The sequence spans 298 residues: uncharacterized protein (298 aa).

It belongs to the NAD(P)-dependent epimerase/dehydratase family.

This is an uncharacterized protein from Saccharomyces cerevisiae (strain ATCC 204508 / S288c) (Baker's yeast).